Consider the following 682-residue polypeptide: MVTSLNEDSESITVEWIENGDTKGKEIDLESIFSLNHDLAPDEEIDPGPEMPPPPAPTTKVNKIVKNRRTVAPVKNETPAKDNRVAAVGSARARPIQPIEQSASRQQNGSVSDISPDQPGKKDFGLASRRKSNCVKEVEKLQEKRERRRLQQQELREKKAQDFDATNPNYEIMCMIKDFRGSLDYRPLTTSDPIDEHRICVCVRKRPLNKKETTIKDLDVITIPIKDVVMVHEPKQKVDLTRFLENQTFRFDYAFDETAPNETVYRFTARPLVETIFERGMATCFAYGQTGSGKTHTMGGDFSGKNQDCSKGIYALAARDVFQMLKKPNYKKLELQVYATFFEIYSGKVFDLLNRKTKLRVLEDGKQQVQVVGLQEREVKCVEDVLKLIEIGNSCRTSGQTSANAHSSRSHAVFQIILRKKGKMHGKFSLIDLAGNERGADTSSADRQTRLEGAEINKSLLALKECIRALGRNKPHTPFRASKLTQVLRDSFIGENSRTCMIATISPGMASCENTLNTLRYANRVKELDPSRCRRPPPHDTSCPQTSWMTWKQCGEWGVAPQRDDLKLLCEQNEEEVSPQLFTFHEAVSQMVEMEEQVVEDHRAVFPGTSIRWLEGLKKCLLEMTEEVDYDADSYATQLEAILEKKIDILTELRDKVKSFRAALQEEEHASKQINPKRPRAL.

The interval methionine 1–aspartate 192 is globular. The disordered stretch occupies residues leucine 39–arginine 129. A compositionally biased stretch (polar residues) spans isoleucine 99–serine 115. A Kinesin motor domain is found at arginine 198 to leucine 528. Glycine 288 to threonine 295 is an ATP binding site. Residues glutamine 638–glutamine 673 are a coiled coil.

Belongs to the TRAFAC class myosin-kinesin ATPase superfamily. Kinesin family. MCAK/KIF2 subfamily. In terms of assembly, interacts with aurka and plk1. In terms of processing, phosphorylation by plk1 promotes location at spindle microtubules and spindle poles, and enhances its microtubule depolymerization activity. Post-translationally, phosphorylation by AURKA interferes with location at spindle microtubules and spindle poles, and inhibits its microtubule depolymerization activity.

The protein localises to the cytoplasm. The protein resides in the cytoskeleton. Its subcellular location is the microtubule organizing center. It localises to the centrosome. It is found in the spindle pole. The protein localises to the spindle. Functionally, plus end-directed microtubule-dependent motor. May regulate microtubule dynamics during axonal growth. Required for normal progression through mitosis. Required for normal congress of chromosomes at the metaphase plate. Required for normal spindle dynamics during mitosis. Promotes spindle turnover. Implicated in formation of bipolar mitotic spindles Has microtubule depolymerization activity. This is Kinesin-like protein KIF2A (kif2a) from Xenopus laevis (African clawed frog).